The sequence spans 75 residues: U6-lycotoxin-Ls1b (75 aa).

The signal sequence occupies residues 1-21; that stretch reads MKLLLFTALVLVVISLIEVEA. The propeptide occupies 22–25; that stretch reads ENER.

This sequence belongs to the neurotoxin 19 (CSTX) family. 06 (U6-Lctx) subfamily. Contains 4 disulfide bonds. As to expression, expressed by the venom gland.

It localises to the secreted. The chain is U6-lycotoxin-Ls1b from Lycosa singoriensis (Wolf spider).